The primary structure comprises 527 residues: Inosine-5'-monophosphate dehydrogenase (527 aa).

CBS domains lie at 121–183 (FILD…VTAV) and 184–240 (MSTD…PLAS). Residues 277–279 (DSS) and 327–329 (GMG) each bind NAD(+). K(+)-binding residues include glycine 329 and glycine 331. An IMP-binding site is contributed by serine 332. Residue cysteine 334 participates in K(+) binding. The active-site Thioimidate intermediate is the cysteine 334. IMP-binding positions include 367 to 369 (DGG) and 390 to 391 (GS). The active-site Proton acceptor is arginine 440. An IMP-binding site is contributed by glutamine 452. The interval 506-527 (ASAQTEGNVHGLHSHEKKLYSS) is disordered. Glutamate 511 and glycine 512 together coordinate K(+). Residues 518 to 527 (HSHEKKLYSS) show a composition bias toward basic and acidic residues.

It belongs to the IMPDH/GMPR family. In terms of assembly, homotetramer. It depends on K(+) as a cofactor.

It localises to the cytoplasm. It catalyses the reaction IMP + NAD(+) + H2O = XMP + NADH + H(+). It participates in purine metabolism; XMP biosynthesis via de novo pathway; XMP from IMP: step 1/1. Mycophenolic acid (MPA) is a non-competitive inhibitor that prevents formation of the closed enzyme conformation by binding to the same site as the amobile flap. In contrast, mizoribine monophosphate (MZP) is a competitive inhibitor that induces the closed conformation. MPA is a potent inhibitor of mammalian IMPDHs but a poor inhibitor of the bacterial enzymes. MZP is a more potent inhibitor of bacterial IMPDH. Its function is as follows. Catalyzes the conversion of inosine 5'-phosphate (IMP) to xanthosine 5'-phosphate (XMP), the first committed and rate-limiting step in the de novo synthesis of guanine nucleotides, and therefore plays an important role in the regulation of cell growth. Part of the gene cluster that mediates the biosynthesis of mycophenolic acid (MPA), the first isolated antibiotic natural product in the world. Does not play a role in the biosynthesis of MPA, but is involved in self resistance to MPA, since MPA acts as an inhibitor of IMP dehydrogenases. This is Inosine-5'-monophosphate dehydrogenase from Penicillium brevicompactum.